Reading from the N-terminus, the 260-residue chain is Imidazole glycerol phosphate synthase subunit HisF (260 aa).

Residues Asp-11 and Asp-130 contribute to the active site.

Belongs to the HisA/HisF family. As to quaternary structure, heterodimer of HisH and HisF.

Its subcellular location is the cytoplasm. The catalysed reaction is 5-[(5-phospho-1-deoxy-D-ribulos-1-ylimino)methylamino]-1-(5-phospho-beta-D-ribosyl)imidazole-4-carboxamide + L-glutamine = D-erythro-1-(imidazol-4-yl)glycerol 3-phosphate + 5-amino-1-(5-phospho-beta-D-ribosyl)imidazole-4-carboxamide + L-glutamate + H(+). Its pathway is amino-acid biosynthesis; L-histidine biosynthesis; L-histidine from 5-phospho-alpha-D-ribose 1-diphosphate: step 5/9. Its function is as follows. IGPS catalyzes the conversion of PRFAR and glutamine to IGP, AICAR and glutamate. The HisF subunit catalyzes the cyclization activity that produces IGP and AICAR from PRFAR using the ammonia provided by the HisH subunit. The chain is Imidazole glycerol phosphate synthase subunit HisF from Thermomicrobium roseum (strain ATCC 27502 / DSM 5159 / P-2).